Here is a 114-residue protein sequence, read N- to C-terminus: Integration host factor subunit alpha (114 aa).

It belongs to the bacterial histone-like protein family. As to quaternary structure, heterodimer of an alpha and a beta chain.

In terms of biological role, this protein is one of the two subunits of integration host factor, a specific DNA-binding protein that functions in genetic recombination as well as in transcriptional and translational control. In Afipia carboxidovorans (strain ATCC 49405 / DSM 1227 / KCTC 32145 / OM5) (Oligotropha carboxidovorans), this protein is Integration host factor subunit alpha.